Here is a 479-residue protein sequence, read N- to C-terminus: Glutamate--tRNA ligase (479 aa).

The 'HIGH' region signature appears at 11–21; sequence PSPTGYLHIGG. Zn(2+) contacts are provided by Cys-108, Cys-110, Cys-135, and Glu-137. A 'KMSKS' region motif is present at residues 250–254; sequence KLSKR. Residue Lys-253 participates in ATP binding.

Belongs to the class-I aminoacyl-tRNA synthetase family. Glutamate--tRNA ligase type 1 subfamily. In terms of assembly, monomer. Requires Zn(2+) as cofactor.

It localises to the cytoplasm. The enzyme catalyses tRNA(Glu) + L-glutamate + ATP = L-glutamyl-tRNA(Glu) + AMP + diphosphate. Its function is as follows. Catalyzes the attachment of glutamate to tRNA(Glu) in a two-step reaction: glutamate is first activated by ATP to form Glu-AMP and then transferred to the acceptor end of tRNA(Glu). This chain is Glutamate--tRNA ligase, found in Myxococcus xanthus (strain DK1622).